The primary structure comprises 487 residues: Glutamate--tRNA ligase 2 (487 aa).

A 'HIGH' region motif is present at residues Pro24–Gly34. Residues Lys258–Arg262 carry the 'KMSKS' region motif. Lys261 contacts ATP.

It belongs to the class-I aminoacyl-tRNA synthetase family. Glutamate--tRNA ligase type 1 subfamily. Monomer.

The protein localises to the cytoplasm. The catalysed reaction is tRNA(Glu) + L-glutamate + ATP = L-glutamyl-tRNA(Glu) + AMP + diphosphate. In terms of biological role, catalyzes the attachment of glutamate to tRNA(Glu) in a two-step reaction: glutamate is first activated by ATP to form Glu-AMP and then transferred to the acceptor end of tRNA(Glu). The polypeptide is Glutamate--tRNA ligase 2 (Novosphingobium aromaticivorans (strain ATCC 700278 / DSM 12444 / CCUG 56034 / CIP 105152 / NBRC 16084 / F199)).